The primary structure comprises 320 residues: Probable L,D-transpeptidase YcfS (320 aa).

A signal peptide spans 1–23 (MMIKTRFSRWLTFFTFAAAVALA). Positions 45 to 90 (KFHVVENDGGSLEAIAKKYNVGFLALLQANPGVDPYVPRAGSVLTI) constitute a LysM domain. The 140-residue stretch at 102–241 (EGIVINIAEL…VTPGTKVNII (140 aa)) folds into the L,D-TPase catalytic domain. His201 (proton donor/acceptor) is an active-site residue. Cys217 acts as the Nucleophile in catalysis.

The protein belongs to the YkuD family. Interacts with DsbG.

It is found in the periplasm. It functions in the pathway cell wall biogenesis; peptidoglycan biosynthesis. Its function is as follows. Responsible, at least in part, for anchoring of the major outer membrane lipoprotein (Lpp, also known as the Braun lipoprotein) to the peptidoglycan via a meso-diaminopimelyl-L-Lys- bond on the terminal residue of Lpp. In Escherichia coli (strain K12), this protein is Probable L,D-transpeptidase YcfS (ycfS).